Here is a 23-residue protein sequence, read N- to C-terminus: Basic phospholipase A2 intermexin (23 aa).

Belongs to the phospholipase A2 family. Group II subfamily. Ca(2+) is required as a cofactor. In terms of processing, contains 7 disulfide bonds. Expressed by the venom gland.

The protein resides in the secreted. It catalyses the reaction a 1,2-diacyl-sn-glycero-3-phosphocholine + H2O = a 1-acyl-sn-glycero-3-phosphocholine + a fatty acid + H(+). Functionally, snake venom phospholipase A2 (PLA2) that shows presynaptic neurotoxicity and low myotoxicity. PLA2 catalyzes the calcium-dependent hydrolysis of the 2-acyl groups in 3-sn-phosphoglycerides. This Gloydius intermedius (Central Asian pit viper) protein is Basic phospholipase A2 intermexin.